We begin with the raw amino-acid sequence, 221 residues long: Glutathione S-transferase U25 (221 aa).

A2 carries the N-acetylalanine modification. The GST N-terminal domain maps to 3–82 (DEVILLDFWP…YIDEVWPSKT (80 aa)). Glutathione contacts are provided by residues 13 to 14 (SM), 39 to 40 (NK), 53 to 54 (KI), and 66 to 67 (ES). The 121-residue stretch at 88–208 (DPYQRAQAKF…LPDSEKIIKF (121 aa)) folds into the GST C-terminal domain. T149 carries the phosphothreonine modification.

It belongs to the GST superfamily. Tau family.

The protein resides in the cytoplasm. It is found in the cytosol. The enzyme catalyses RX + glutathione = an S-substituted glutathione + a halide anion + H(+). In terms of biological role, may be involved in the conjugation of reduced glutathione to a wide number of exogenous and endogenous hydrophobic electrophiles and have a detoxification role against certain herbicides. In Arabidopsis thaliana (Mouse-ear cress), this protein is Glutathione S-transferase U25 (GSTU25).